Consider the following 219-residue polypeptide: MKFRLTALAVAALLTSTASFAGVVTTSSNVDFLAIDGQKASKSLIKQARSFNITDTNQHQVVVRVSEIIRGGSESNLFESDPIVVTFQGTTEDIQISAPTLRSERDVEKFKQSPVISVTTASGAAVQTKQEYLTQEGFLPSVNLVENLSNYNASGAKAAVASFATTTMPTAMGTTGAGKVAKGKVTVQGENAAEQMLQYWFQQADKETQTRFLNWAKKQ.

The signal sequence occupies residues 1-21 (MKFRLTALAVAALLTSTASFA).

It belongs to the UPF0319 family.

The protein is UPF0319 protein MS0844 of Mannheimia succiniciproducens (strain KCTC 0769BP / MBEL55E).